The primary structure comprises 2364 residues: Cytotoxin-L (2364 aa).

The interval 1 to 91 (MNLVNKAQLQ…EVLELKNNSL (91 aa)) is four-helical bundle. Residues 96-468 (KNLHFIWIGG…APDVRSTINL (373 aa)) form the GT44 domain. Positions 96 to 468 (KNLHFIWIGG…APDVRSTINL (373 aa)) are glucosyltransferase region. UDP-alpha-D-glucose is bound by residues 101-103 (IWI), N139, 265-270 (LAAASD), and 286-288 (DVD). Mg(2+)-binding residues include D288, E515, and S518. UDP-alpha-D-glucose is bound at residue 518–520 (SLW). Residues 544 to 799 (GEDDNLDFAQ…KSKYLHELST (256 aa)) are autoprocessing region. 2 residues coordinate Zn(2+): E545 and D546. Residues 567–774 (LSSMKTRNKE…EESIIKDISS (208 aa)) enclose the Peptidase C80 domain. Y577, K600, and K647 together coordinate 1D-myo-inositol hexakisphosphate. H653 is a binding site for Zn(2+). Residue H653 is the For protease activity of the active site. The active-site Nucleophile; for protease activity is C698. A Zn(2+)-binding site is contributed by H757. Positions 764, 775, and 792 each coordinate 1D-myo-inositol hexakisphosphate. The segment at 800–1500 (LLQEIRNNAN…ESIIRNIYMP (701 aa)) is translocation region. Interaction with host SEMA6A and SEMA6B regions lie at residues 1433–1438 (CMKLIE), 1466–1471 (DNETKY), 1484–1495 (FTAEFSNESIIR), 1504–1511 (NLFIYSSK), and 1596–1601 (YNNLDP). Cell wall-binding repeat units follow at residues 1813-1832 (EFGL…FGNM), 1833-1852 (VSGL…PKNN), 1854-1873 (ITGF…TKSG), 1876-1895 (SIGE…QGIL), 1926-1945 (FIGK…NYRA), 1946-1965 (AVEW…KTGE), 1967-1986 (LKGL…NGIM), 1987-2006 (QTGF…DGVM), 2007-2026 (QVGY…NGER), 2057-2076 (YNGI…SNTA), 2077-2097 (VVGW…NRAE), 2099-2118 (CIGL…NGIR), 2119-2138 (QLGF…SGKI), 2139-2158 (ELGY…SGLV), 2209-2224 (ETGW…YFDP), 2227-2249 (KKAY…NGIM), 2250-2269 (RTGL…DGKM), 2270-2289 (QFGY…DGKM), 2320-2339 (YTGW…EYIA), and 2340-2359 (ATGS…DTAE). The tract at residues 1835-2364 (GLIYINDSLY…PDTAELVVSE (530 aa)) is receptor-binding (CROPS) region.

The protein belongs to the clostridial glucosylating toxin (LCGT) family. Homomultimer; forms an inactive homomultimer at pH 8, which dissociates at pH 4, leading to cytotoxicity. Interacts with host SEMA6A; interaction promotes toxin entry into host cell. Interacts with host SEMA6B; interaction promotes toxin entry into host cell. Zn(2+) serves as cofactor. Requires Mn(2+) as cofactor. The cofactor is Mg(2+). Undergoes autocatalytic cleavage to release the N-terminal part (Glucosyltransferase TcsL), which constitutes the active part of the toxin, in the host cytosol. 1D-myo-inositol hexakisphosphate-binding (InsP6) activates the peptidase C80 domain and promotes autoprocessing.

It localises to the secreted. It is found in the host endosome membrane. The protein localises to the host cytoplasm. Its subcellular location is the host cytosol. The protein resides in the host cell membrane. It catalyses the reaction L-threonyl-[protein] + UDP-alpha-D-glucose = 3-O-(alpha-D-glucosyl)-L-threonyl-[protein] + UDP + H(+). Its activity is regulated as follows. Protease activity is activated upon binding to 1D-myo-inositol hexakisphosphate (InsP6), which induces conformational reorganization. Functionally, precursor of a cytotoxin that targets the vascular endothelium, inducing an anti-inflammatory effect and resulting in lethal toxic shock syndrome. TcsL constitutes the main toxin that mediates the pathology of P.sordellii infection, an anaerobic Gram-positive bacterium found in soil and in the gastrointestinal and vaginal tracts of animals and humans; although the majority of carriers are asymptomatic, pathogenic P.sordellii infections arise rapidly and are highly lethal. This form constitutes the precursor of the toxin: it enters into host cells and mediates autoprocessing to release the active toxin (Glucosyltransferase TcsL) into the host cytosol. Targets vascular endothelium by binding to the semaphorin proteins SEMA6A and SEMA6B, and enters host cells via clathrin-mediated endocytosis. Once entered into host cells, acidification in the endosome promotes the membrane insertion of the translocation region and formation of a pore, leading to translocation of the GT44 and peptidase C80 domains across the endosomal membrane. This activates the peptidase C80 domain and autocatalytic processing, releasing the N-terminal part (Glucosyltransferase TcsL), which constitutes the active part of the toxin, in the cytosol. Its function is as follows. Active form of the toxin, which is released into the host cytosol following autoprocessing and inactivates small GTPases. Acts by mediating monoglucosylation of small GTPases of the Ras (H-Ras/HRAS, K-Ras/KRAS, N-Ras/NRAS and Ral/RALA) family in host cells at the conserved threonine residue located in the switch I region ('Thr-37/35'), using UDP-alpha-D-glucose as the sugar donor. Also able to catalyze monoglucosylation of some members of the Rho family (Rac1 and Rap2A), but with less efficiency than with Ras proteins. Monoglucosylation of host small GTPases completely prevents the recognition of the downstream effector, blocking the GTPases in their inactive form and leading to apoptosis. Induces an anti-inflammatory effect, mainly by inactivating Ras proteins which results in blockage of the cell cycle and killing of immune cells. The absence or moderate local inflammatory response allows C.sordellii spreading in deep tissues, production of toxin which is released in the general circulation and causes a toxic shock syndrome. This chain is Cytotoxin-L, found in Paraclostridium sordellii (Clostridium sordellii).